A 505-amino-acid polypeptide reads, in one-letter code: Alpha-1-syntrophin (505 aa).

Residues methionine 1–leucine 77 form a disordered region. 2 PH domains span residues arginine 6–asparagine 269 and aspartate 293–histidine 401. A PDZ domain is found at arginine 87 to lysine 170. Serine 101, serine 184, serine 189, serine 193, and serine 200 each carry phosphoserine. A disordered region spans residues alanine 180–aspartate 211. Residues proline 449 to alanine 505 form the SU domain. Residues proline 483–alanine 505 form a calmodulin-binding region.

It belongs to the syntrophin family. In terms of assembly, monomer and homodimer. Interacts with the dystrophin related protein DTNA; SGCG of the dystrophin glycoprotein complex; NOS1; GRB2; GA; TGFA; MAPK12 and the sodium channel proteins SCN4A and SCN5A. Interacts with the dystrophin protein DMD in a calmodulin dependent manner and with related protein UTRN; SGCA of the dystrophin glycoprotein complex; F-actin; calmodulin and with the other members of the syntrophin family SNTB1 and SNTB2. Interacts with MYOC; regulates muscle hypertrophy. Interacts with DTNB. Phosphorylated by CaM-kinase II. Phosphorylation may inhibit the interaction with DMD.

Its subcellular location is the cell membrane. It localises to the sarcolemma. It is found in the cell junction. The protein localises to the cytoplasm. The protein resides in the cytoskeleton. Functionally, adapter protein that binds to and probably organizes the subcellular localization of a variety of membrane proteins. May link various receptors to the actin cytoskeleton and the extracellular matrix via the dystrophin glycoprotein complex. Plays an important role in synapse formation and in the organization of UTRN and acetylcholine receptors at the neuromuscular synapse. Binds to phosphatidylinositol 4,5-bisphosphate. This is Alpha-1-syntrophin (SNTA1) from Bos taurus (Bovine).